Reading from the N-terminus, the 591-residue chain is Aspartate--tRNA ligase (591 aa).

Glu173 lines the L-aspartate pocket. The interval 197–200 is aspartate; sequence QLFK. Arg219 provides a ligand contact to L-aspartate. Residues 219–221 and Gln228 contribute to the ATP site; that span reads RDE. His448 lines the L-aspartate pocket. Position 482 (Glu482) interacts with ATP. Arg489 contributes to the L-aspartate binding site. Residue 534–537 coordinates ATP; it reads GLDR.

The protein belongs to the class-II aminoacyl-tRNA synthetase family. Type 1 subfamily. In terms of assembly, homodimer.

It localises to the cytoplasm. It catalyses the reaction tRNA(Asp) + L-aspartate + ATP = L-aspartyl-tRNA(Asp) + AMP + diphosphate. Its function is as follows. Catalyzes the attachment of L-aspartate to tRNA(Asp) in a two-step reaction: L-aspartate is first activated by ATP to form Asp-AMP and then transferred to the acceptor end of tRNA(Asp). In Shewanella sp. (strain MR-7), this protein is Aspartate--tRNA ligase.